A 393-amino-acid chain; its full sequence is Branched-chain-amino-acid aminotransferase, mitochondrial (393 aa).

Residues 1 to 27 (MAAATLGQVWARKLLPVPWLLCGSKRC) constitute a mitochondrion transit peptide. Tyr169 contacts substrate. Lys230 is modified (N6-(pyridoxal phosphate)lysine). Lys322 is modified (N6-acetyllysine).

This sequence belongs to the class-IV pyridoxal-phosphate-dependent aminotransferase family. In terms of assembly, homodimer. It depends on pyridoxal 5'-phosphate as a cofactor.

Its subcellular location is the mitochondrion. It carries out the reaction L-leucine + 2-oxoglutarate = 4-methyl-2-oxopentanoate + L-glutamate. It catalyses the reaction L-isoleucine + 2-oxoglutarate = (S)-3-methyl-2-oxopentanoate + L-glutamate. The catalysed reaction is L-valine + 2-oxoglutarate = 3-methyl-2-oxobutanoate + L-glutamate. Functionally, catalyzes the first reaction in the catabolism of the essential branched chain amino acids leucine, isoleucine, and valine. May also function as a transporter of branched chain alpha-keto acids. In Mus musculus (Mouse), this protein is Branched-chain-amino-acid aminotransferase, mitochondrial (Bcat2).